We begin with the raw amino-acid sequence, 377 residues long: MSNGIVIIGSGFAARQLVKNIRKQDATIPLTLIAADSMDEYNKPDLSHVISQGQRADDLTRQTAGEFAEQFNLRLFPHTWVTDIDAEARVVKSQNNQWQYDKLVLATGASAFVPPVPGRELMLTLNSQQEYRACETQLRDARRVLIVGGGLIGSELAMDFCRAGKAVTLIDNAASILASLMPPEVSSRLQHRLTEMGVHLLLKSQLQGLEKTDSGILATLDRQRSIEVDAVIAATGLRPETALARRAGLTINRGVCVDSYLQTRNADIYALGDCAEINGQVLPFLQPIQLSAMVLAKNLLGNNTPLKLPAMLVKIKTPELPLHLAGETQRRDLRWQICTESQGMVARGVDGADQLRAFVVSEDRMKEAFGLLKTLPM.

Belongs to the FAD-dependent oxidoreductase family. It depends on FAD as a cofactor.

Its subcellular location is the cytoplasm. It carries out the reaction 2 reduced [nitric oxide reductase rubredoxin domain] + NAD(+) + H(+) = 2 oxidized [nitric oxide reductase rubredoxin domain] + NADH. Its pathway is nitrogen metabolism; nitric oxide reduction. In terms of biological role, one of at least two accessory proteins for anaerobic nitric oxide (NO) reductase. Reduces the rubredoxin moiety of NO reductase. The chain is Nitric oxide reductase FlRd-NAD(+) reductase from Escherichia coli (strain SE11).